A 440-amino-acid polypeptide reads, in one-letter code: UDP-N-acetylmuramoylalanine--D-glutamate ligase (440 aa).

Position 112-118 (Gly112–Thr118) interacts with ATP.

Belongs to the MurCDEF family.

Its subcellular location is the cytoplasm. It carries out the reaction UDP-N-acetyl-alpha-D-muramoyl-L-alanine + D-glutamate + ATP = UDP-N-acetyl-alpha-D-muramoyl-L-alanyl-D-glutamate + ADP + phosphate + H(+). Its pathway is cell wall biogenesis; peptidoglycan biosynthesis. Functionally, cell wall formation. Catalyzes the addition of glutamate to the nucleotide precursor UDP-N-acetylmuramoyl-L-alanine (UMA). The chain is UDP-N-acetylmuramoylalanine--D-glutamate ligase from Blochmanniella pennsylvanica (strain BPEN).